Consider the following 419-residue polypeptide: Serine hydroxymethyltransferase (419 aa).

Residues leucine 121 and 125–127 (GHL) contribute to the (6S)-5,6,7,8-tetrahydrofolate site. Position 230 is an N6-(pyridoxal phosphate)lysine (lysine 230). A (6S)-5,6,7,8-tetrahydrofolate-binding site is contributed by 355–357 (SPF).

The protein belongs to the SHMT family. Homodimer. Requires pyridoxal 5'-phosphate as cofactor.

The protein localises to the cytoplasm. The catalysed reaction is (6R)-5,10-methylene-5,6,7,8-tetrahydrofolate + glycine + H2O = (6S)-5,6,7,8-tetrahydrofolate + L-serine. The protein operates within one-carbon metabolism; tetrahydrofolate interconversion. It functions in the pathway amino-acid biosynthesis; glycine biosynthesis; glycine from L-serine: step 1/1. In terms of biological role, catalyzes the reversible interconversion of serine and glycine with tetrahydrofolate (THF) serving as the one-carbon carrier. This reaction serves as the major source of one-carbon groups required for the biosynthesis of purines, thymidylate, methionine, and other important biomolecules. Also exhibits THF-independent aldolase activity toward beta-hydroxyamino acids, producing glycine and aldehydes, via a retro-aldol mechanism. This is Serine hydroxymethyltransferase from Streptococcus equi subsp. zooepidemicus (strain MGCS10565).